A 535-amino-acid chain; its full sequence is Beta-hexosaminidase 3 (535 aa).

The N-terminal stretch at 1-24 (MRGSGAKIAGVLPLFMLFIAGTIS) is a signal peptide. Asparagine 92 carries N-linked (GlcNAc...) asparagine glycosylation. Cysteine 292 and cysteine 334 are disulfide-bonded. Glutamate 329 serves as the catalytic Proton donor. Asparagine 331, asparagine 405, asparagine 441, and asparagine 496 each carry an N-linked (GlcNAc...) asparagine glycan. Residues cysteine 506 and cysteine 532 are joined by a disulfide bond.

Belongs to the glycosyl hydrolase 20 family. N-glycosylated. In terms of tissue distribution, expressed in roots, leaves, stems, flowers and siliques.

It localises to the cell membrane. The enzyme catalyses Hydrolysis of terminal non-reducing N-acetyl-D-hexosamine residues in N-acetyl-beta-D-hexosaminides.. Slightly inhibited by N-acetylcastanospermine. In terms of biological role, has a broad substrate specificity. Can use synthetic substrates such as pyridylaminated chitotriose, p-nitrophenyl-beta-N-acetylglucosaminide, p-nitrophenyl-2-acetamido-2-deoxy-beta-D-glucopyranoside (pNP-GlcNAc), p-nitrophenyl-2-acetamido-2-deoxy-beta-D-galactopyranoside (pNP-GalNAc), 4-methylumbelliferyl-2-acetamido-2-deoxy-beta-D-glucopyranoside (MU-GlcNAc), and 4-methylumbelliferyl-6-sulfo-2-acetamido-2-deoxy-beta-D-glucopyranoside (MU-GlcNAc-6SO(4)) as substrates. Removes terminal GlcNAc residues from alpha1,3- and alpha1,6-mannosyl branches of biantennary N-glycans without any strict branch preference. Required for the presence of paucimannosidic N-glycans in glycoproteins of roots and leaves. The polypeptide is Beta-hexosaminidase 3 (HEXO3) (Arabidopsis thaliana (Mouse-ear cress)).